Reading from the N-terminus, the 212-residue chain is Thymidylate kinase (212 aa).

10-17 (GLEGAGKS) serves as a coordination point for ATP.

It belongs to the thymidylate kinase family.

It carries out the reaction dTMP + ATP = dTDP + ADP. Phosphorylation of dTMP to form dTDP in both de novo and salvage pathways of dTTP synthesis. In Vibrio cholerae serotype O1 (strain ATCC 39541 / Classical Ogawa 395 / O395), this protein is Thymidylate kinase.